Here is a 170-residue protein sequence, read N- to C-terminus: tRNA-splicing endonuclease (170 aa).

Active-site residues include Tyr110, His116, and Lys147.

This sequence belongs to the tRNA-intron endonuclease family. Archaeal short subfamily. Homotetramer; although the tetramer contains four active sites, only two participate in the cleavage. Therefore, it should be considered as a dimer of dimers.

The enzyme catalyses pretRNA = a 3'-half-tRNA molecule with a 5'-OH end + a 5'-half-tRNA molecule with a 2',3'-cyclic phosphate end + an intron with a 2',3'-cyclic phosphate and a 5'-hydroxyl terminus.. Endonuclease that removes tRNA introns. Cleaves pre-tRNA at the 5'- and 3'-splice sites to release the intron. The products are an intron and two tRNA half-molecules bearing 2',3' cyclic phosphate and 5'-OH termini. Recognizes a pseudosymmetric substrate in which 2 bulged loops of 3 bases are separated by a stem of 4 bp. The sequence is that of tRNA-splicing endonuclease from Pyrococcus abyssi (strain GE5 / Orsay).